Consider the following 365-residue polypeptide: Flagellar P-ring protein (365 aa).

The first 21 residues, M1 to A21, serve as a signal peptide directing secretion.

It belongs to the FlgI family. The basal body constitutes a major portion of the flagellar organelle and consists of four rings (L,P,S, and M) mounted on a central rod.

Its subcellular location is the periplasm. It is found in the bacterial flagellum basal body. In terms of biological role, assembles around the rod to form the L-ring and probably protects the motor/basal body from shearing forces during rotation. The protein is Flagellar P-ring protein of Geobacter metallireducens (strain ATCC 53774 / DSM 7210 / GS-15).